The following is a 480-amino-acid chain: Gamma-aminobutyric acid receptor subunit rho-1 (480 aa).

The signal sequence occupies residues 1 to 21; the sequence is MLAVRNMKFGIFLLWWGWVLA. At 22 to 281 the chain is on the extracellular side; that stretch reads AESTVHWPGR…LYINFTLRRH (260 aa). The tract at residues 31 to 67 is disordered; it reads REVHEPSKKGSRPQRQRRGAHDDAHKQGSPILKRSSD. Residues 39–48 show a composition bias toward basic residues; it reads KGSRPQRQRR. R126 contacts 4-aminobutanoate. N-linked (GlcNAc...) asparagine glycosylation occurs at N141. S190 contributes to the 4-aminobutanoate binding site. An intrachain disulfide couples C199 to C213. Residue E218 participates in 4-aminobutanoate binding. Residues N235 and N275 are each glycosylated (N-linked (GlcNAc...) asparagine). A helical membrane pass occupies residues 282–302; the sequence is IFFFLLQTYFPATLMVMLSWV. The Cytoplasmic portion of the chain corresponds to 303–314; that stretch reads SFWIDRRAVPAR. Residues 315-335 form a helical membrane-spanning segment; that stretch reads VPLGITTVLTMSTIITGVNAS. The Extracellular segment spans residues 336 to 346; that stretch reads MPRVSYIKAVD. A helical membrane pass occupies residues 347–367; it reads IYLWVSFVFVFLSVLEYAAVN. Residues 368 to 458 are Cytoplasmic-facing; the sequence is YLTTVQERKE…MRINTHAIDK (91 aa). A helical membrane pass occupies residues 459–479; it reads YSRIIFPAAYILFNLIYWSIF. A topological domain (extracellular) is located at residue S480.

Belongs to the ligand-gated ion channel (TC 1.A.9) family. Gamma-aminobutyric acid receptor (TC 1.A.9.5) subfamily. GABRR1 sub-subfamily. Three rho subunits (rho-1/GBRR1, rho-2/GBRR2 and rho-3/GBRR3) coassemble either to form functional homopentamers or heteropentamers. Rho-1/GBRR1 subunits can also associate with alpha-1/GBRA1 subunits to form a functional GABAAR. Interacts with SQSTM1.

Its subcellular location is the postsynaptic cell membrane. The protein resides in the cell membrane. The enzyme catalyses chloride(in) = chloride(out). Its activity is regulated as follows. Inhibited by TPMPA, a rho-specific antagonist. Inhibited by picrotoxin, when forming a homopentamer. In contrast with other GABAARs, rho-1 GABAAR is not inhibited by bicuculline, when forming a homopentamer. Down-regulated by external protons when forming a homopentamer. Its function is as follows. Rho subunit of the pentameric ligand-gated chloride channels responsible for mediating the effects of gamma-aminobutyric acid (GABA), the major inhibitory neurotransmitter in the brain. Rho-containing GABA-gated chloride channels are a subclass of GABA(A) receptors (GABAARs) entirely composed of rho subunits, where GABA molecules bind at the rho intersubunit interfaces. When activated by GABA, rho-GABAARs selectively allow the flow of chloride anions across the cell membrane down their electrochemical gradient. Rho-1 subunits are primarily expressed in retina where rho-1-containing GABAARs may play a role in retinal neurotransmission. Rho-1 GABAARs are also involved in neuronal tonic (extrasynaptic) and phasic (synaptic) transmission in the Purkinje neurons of the cerebellum. Rho-1 GABAARs may also contribute to the regulation of glial development in the cerebellum by controlling extrasynaptic transmission. This Rattus norvegicus (Rat) protein is Gamma-aminobutyric acid receptor subunit rho-1.